The sequence spans 1141 residues: Envelopment polyprotein (1141 aa).

The signal sequence occupies residues 1-18 (MGRLYLIVLGVLITATAG). The Lumenal segment spans residues 19–483 (FPRSVHELKI…HSLAVELCVP (465 aa)). 10 disulfide bridges follow: Cys30–Cys158, Cys64–Cys164, Cys113–Cys135, Cys140–Cys145, Cys182–Cys192, Cys217–Cys253, Cys242–Cys357, Cys382–Cys441, Cys386–Cys395, and Cys458–Cys481. Residue Asn141 is glycosylated (N-linked (GlcNAc...) asparagine; by host). N-linked (GlcNAc...) asparagine; by host glycosylation occurs at Asn353. Asn405 carries an N-linked (GlcNAc...) asparagine; by host glycan. The chain crosses the membrane as a helical span at residues 484 to 506 (GIHGWATIALVITFCFGWLLIPT). Residues 507 to 633 (TTMVVLKCLR…LGVFRYKSRC (127 aa)) lie on the Cytoplasmic side of the membrane. The tract at residues 522 to 539 (CSHYSTESKFKVILEKVK) is binding to the ribonucleoprotein. 2 consecutive CCHC-type zinc fingers follow at residues 551 to 571 (CDIC…KKSC) and 576 to 597 (CPYC…YAVC). 3 binding to the ribonucleoprotein regions span residues 594-611 (YAVC…KKSL), 598-609 (KLTGRFHEALKK), and 617-631 (QRGC…RYKS). The region spanning 617-640 (QRGCYRTLGVFRYKSRCYVGLVWM) is the ITAM domain. Phosphotyrosine occurs at positions 621 and 634. The YxxL signature appears at 621 to 624 (YRTL). The chain crosses the membrane as a helical span at residues 634-654 (YVGLVWMCLLTLELIVWAASA). At 655–1110 (DTPLLEPGWS…EWLLGILNGN (456 aa)) the chain is on the lumenal side. Intrachain disulfides connect Cys741/Cys776, Cys745/Cys783, Cys757/Cys890, Cys771/Cys901, Cys786/Cys909, Cys812/Cys821, Cys829/Cys838, and Cys869/Cys873. A fusion loop region spans residues 763–783 (YQYETSWSCNPPDCPGVGTGC). Asn933 is a glycosylation site (N-linked (GlcNAc...) asparagine; by host). Cystine bridges form between Cys975/Cys1005, Cys998/Cys1050, Cys1015/Cys1020, Cys1051/Cys1056, and Cys1090/Cys1094. The chain crosses the membrane as a helical span at residues 1111–1131 (WVVVAVLVIILLISIFLFSFF). The segment at 1127–1141 (LFSFFCPIRSHKKQL) is binding to the ribonucleoprotein. The Cytoplasmic portion of the chain corresponds to 1132–1141 (CPIRSHKKQL).

It belongs to the hantavirus envelope glycoprotein family. Homodimer. Homotetramer; forms heterotetrameric Gn-Gc spikes in the pre-fusion conformation. Interacts (via C-terminus) with the nucleoprotein. Interacts with host TUFM; this interaction contributes to the virus-induced degradation of mitochondria by autophagy, which leads to degradation of host MAVS and inhibition of type I interferon (IFN) responses. Interacts with host MAP1LC3B; this interaction contributes to the virus-induced degradation of mitochondria by autophagy, which leads to degradation of host MAVS and inhibition of type I interferon (IFN) responses. As to quaternary structure, homodimer. Homotetramer; forms heterotetrameric Gn-Gc spikes in the pre-fusion conformation. Homotrimer; forms homotrimer in the post-fusion conformation at acidic pH. Interacts (via C-terminus) with the nucleoprotein. In terms of processing, envelope polyprotein precursor is quickly cleaved in vivo just after synthesis, presumably by host signal peptidase.

The protein localises to the virion membrane. The protein resides in the host cell surface. Its subcellular location is the host Golgi apparatus membrane. It is found in the host endoplasmic reticulum membrane. It localises to the host mitochondrion. Its function is as follows. Forms homotetramers with glycoprotein C at the surface of the virion. Attaches the virion to host cell receptors including integrin ITGAV/ITGB3. This attachment induces virion internalization predominantly through clathrin-dependent endocytosis. Mediates the assembly and budding of infectious virus particles through its interaction with the nucleocapsid protein and the viral genome. May dysregulate normal immune and endothelial cell responses through an ITAM motif. Translocates to mitochondria, binds to host TUFM and recruits MAP1LC3B. These interactions induce mitochondrial autophagy and therefore destruction of host MAVS leading to inhibition of type I interferon (IFN) responses. Concomitant breakdown of glycoprotein N is apparently prevented by the nucleoprotein that may inhibit Gn-stimulated autophagosome-lysosome fusion. Interacts with the viral genomic RNA. Functionally, forms homotetramers with glycoprotein N at the surface of the virion. Attaches the virion to host cell receptors including integrin ITGAV/ITGB3. This attachment induces virion internalization predominantly through clathrin-dependent endocytosis. Class II fusion protein that promotes fusion of viral membrane with host endosomal membrane after endocytosis of the virion. The chain is Envelopment polyprotein (GP) from Homo sapiens (Human).